We begin with the raw amino-acid sequence, 175 residues long: Large ribosomal subunit protein uL10 (175 aa).

It belongs to the universal ribosomal protein uL10 family. Part of the ribosomal stalk of the 50S ribosomal subunit. The N-terminus interacts with L11 and the large rRNA to form the base of the stalk. The C-terminus forms an elongated spine to which L12 dimers bind in a sequential fashion forming a multimeric L10(L12)X complex.

Its function is as follows. Forms part of the ribosomal stalk, playing a central role in the interaction of the ribosome with GTP-bound translation factors. This is Large ribosomal subunit protein uL10 from Prochlorococcus marinus subsp. pastoris (strain CCMP1986 / NIES-2087 / MED4).